The sequence spans 354 residues: Release factor glutamine methyltransferase (354 aa).

Residues 174–178 (GSGSG), Asp197, and Asn241 contribute to the S-adenosyl-L-methionine site. 241–244 (NPPY) lines the substrate pocket.

The protein belongs to the protein N5-glutamine methyltransferase family. PrmC subfamily.

The enzyme catalyses L-glutaminyl-[peptide chain release factor] + S-adenosyl-L-methionine = N(5)-methyl-L-glutaminyl-[peptide chain release factor] + S-adenosyl-L-homocysteine + H(+). Its function is as follows. Methylates the class 1 translation termination release factors RF1/PrfA and RF2/PrfB on the glutamine residue of the universally conserved GGQ motif. This chain is Release factor glutamine methyltransferase, found in Fusobacterium nucleatum subsp. nucleatum (strain ATCC 25586 / DSM 15643 / BCRC 10681 / CIP 101130 / JCM 8532 / KCTC 2640 / LMG 13131 / VPI 4355).